The primary structure comprises 360 residues: Ferredoxin--NADP reductase, leaf isozyme, chloroplastic (360 aa).

The N-terminal 52 residues, 1–52 (MAAAVTAAVSLPYSNSTSLPIRTSIVAPERLVFKKVSLNNVSISGRVGTIRA), are a transit peptide targeting the chloroplast. Positions 81-203 (KEPYVGRCLL…TGPVGKEMLM (123 aa)) constitute an FAD-binding FR-type domain. FAD-binding positions include 139–142 (RLYS), 160–162 (CVK), Tyr166, 177–179 (VCS), and Thr218. NADP(+)-binding residues include Ser142 and Lys162. NADP(+)-binding positions include Thr218, 250-251 (VP), 280-281 (SR), Lys290, 319-320 (GL), and Glu358.

It belongs to the ferredoxin--NADP reductase type 1 family. In terms of assembly, monomer. Interacts with TIC62 (via C-terminus). The cofactor is FAD.

The protein localises to the plastid. The protein resides in the chloroplast stroma. Its subcellular location is the chloroplast thylakoid membrane. It catalyses the reaction 2 reduced [2Fe-2S]-[ferredoxin] + NADP(+) + H(+) = 2 oxidized [2Fe-2S]-[ferredoxin] + NADPH. The protein operates within energy metabolism; photosynthesis. Functionally, may play a key role in regulating the relative amounts of cyclic and non-cyclic electron flow to meet the demands of the plant for ATP and reducing power. The protein is Ferredoxin--NADP reductase, leaf isozyme, chloroplastic (PETH) of Pisum sativum (Garden pea).